Reading from the N-terminus, the 210-residue chain is Guanylate kinase (210 aa).

The region spanning 5–183 (GILFVISAPS…AVEEFKSIIL (179 aa)) is the Guanylate kinase-like domain. 12 to 19 (APSGAGKT) contributes to the ATP binding site.

It belongs to the guanylate kinase family.

It localises to the cytoplasm. The enzyme catalyses GMP + ATP = GDP + ADP. Functionally, essential for recycling GMP and indirectly, cGMP. The protein is Guanylate kinase of Syntrophotalea carbinolica (strain DSM 2380 / NBRC 103641 / GraBd1) (Pelobacter carbinolicus).